The chain runs to 248 residues: Phosphoribosylformylglycinamidine synthase subunit PurQ (248 aa).

The 243-residue stretch at 6-248 (AMVLRMEGTN…IFFRILYNST (243 aa)) folds into the Glutamine amidotransferase type-1 domain. Cys-95 acts as the Nucleophile in catalysis. Residues His-215 and Glu-217 contribute to the active site.

As to quaternary structure, part of the FGAM synthase complex composed of 1 PurL, 1 PurQ and 2 PurS subunits.

It localises to the cytoplasm. The enzyme catalyses N(2)-formyl-N(1)-(5-phospho-beta-D-ribosyl)glycinamide + L-glutamine + ATP + H2O = 2-formamido-N(1)-(5-O-phospho-beta-D-ribosyl)acetamidine + L-glutamate + ADP + phosphate + H(+). It carries out the reaction L-glutamine + H2O = L-glutamate + NH4(+). The protein operates within purine metabolism; IMP biosynthesis via de novo pathway; 5-amino-1-(5-phospho-D-ribosyl)imidazole from N(2)-formyl-N(1)-(5-phospho-D-ribosyl)glycinamide: step 1/2. Functionally, part of the phosphoribosylformylglycinamidine synthase complex involved in the purines biosynthetic pathway. Catalyzes the ATP-dependent conversion of formylglycinamide ribonucleotide (FGAR) and glutamine to yield formylglycinamidine ribonucleotide (FGAM) and glutamate. The FGAM synthase complex is composed of three subunits. PurQ produces an ammonia molecule by converting glutamine to glutamate. PurL transfers the ammonia molecule to FGAR to form FGAM in an ATP-dependent manner. PurS interacts with PurQ and PurL and is thought to assist in the transfer of the ammonia molecule from PurQ to PurL. The sequence is that of Phosphoribosylformylglycinamidine synthase subunit PurQ from Picrophilus torridus (strain ATCC 700027 / DSM 9790 / JCM 10055 / NBRC 100828 / KAW 2/3).